Reading from the N-terminus, the 105-residue chain is Heat shock protein HspQ (105 aa).

Residues 75 to 105 form a disordered region; that stretch reads GEMQEEHPEQPSMDELARSIRQQLQAPRLRN.

This sequence belongs to the HspQ family.

It is found in the cytoplasm. Its function is as follows. Involved in the degradation of certain denaturated proteins, including DnaA, during heat shock stress. The polypeptide is Heat shock protein HspQ (Cronobacter sakazakii (strain ATCC BAA-894) (Enterobacter sakazakii)).